Here is a 330-residue protein sequence, read N- to C-terminus: Probable xanthine dehydrogenase subunit A (330 aa).

Could be composed of four subunits: PucA, PucC, PucD and PucE.

The enzyme catalyses xanthine + NAD(+) + H2O = urate + NADH + H(+). The catalysed reaction is hypoxanthine + NAD(+) + H2O = xanthine + NADH + H(+). It participates in purine metabolism; hypoxanthine degradation; urate from hypoxanthine: step 1/2. It functions in the pathway purine metabolism; hypoxanthine degradation; urate from hypoxanthine: step 2/2. In terms of biological role, oxidizes hypoxanthine and xanthine to uric acid. PucA subunit could exert a molybdenum cofactor recruiting function. This Bacillus subtilis (strain 168) protein is Probable xanthine dehydrogenase subunit A (pucA).